Consider the following 436-residue polypeptide: Hydrogenobyrinate a,c-diamide synthase (436 aa).

A GATase cobBQ-type domain is found at 244–435; the sequence is RIAVARDDAF…MHVIDFSGEA (192 aa). Residue C327 is the Nucleophile of the active site.

It belongs to the CobB/CbiA family. The cofactor is Mg(2+).

It carries out the reaction hydrogenobyrinate + 2 L-glutamine + 2 ATP + 2 H2O = hydrogenobyrinate a,c-diamide + 2 L-glutamate + 2 ADP + 2 phosphate + 2 H(+). It functions in the pathway cofactor biosynthesis; adenosylcobalamin biosynthesis; cob(II)yrinate a,c-diamide from precorrin-2 (aerobic route): step 9/10. Catalyzes the ATP-dependent amidation of the two carboxylate groups at positions a and c of hydrogenobyrinate, using either L-glutamine or ammonia as the nitrogen source. The chain is Hydrogenobyrinate a,c-diamide synthase from Brucella ovis (strain ATCC 25840 / 63/290 / NCTC 10512).